Here is a 511-residue protein sequence, read N- to C-terminus: MRIGPVELSAVKDWDPAPGVLVSWHPTPASCAKALAAPVSAVPPSYVQARQIRSFSEQAARGLDHSRLLIASVEVFGHCDLRAMTYVINAHLRRHDTYRSWFELRDTDHIVRHSIADPADIEFVPTTHGEMTSADLRQHIVATPDSLHWDCFSFGVIQRADSFTFYASIDHLHADGQFVGVGLMEFQSMYTALIMGEPPIGLSEAGSYVDFCVRQHEYTSALTVDSPEVRAWIDFAEINNGTFPEFPLPLGDPSVRCGGDLLSMMLMDEQQTQRFESACMAANARFIGGILACIAIAIHELTGADTYFGITPKDIRTPADLMTQGWFTGQIPVTVPVAGLSFNEIARIAQTSFDTGADLAKVPFERVVELSPSLRRPQPLFSLVNFFDAQVGPLSAVTKLFEGLNVGTYSDGRVTYPLSTMVGRFDETAASVLFPDNPVARESVTAYLRAIRSVCMRIANGGTAERVGNVVALSPGRRNNIERMTWRSCRAGDFIDICNLKVANVTVDREA.

The protein belongs to the PapA acyltransferase family.

The catalysed reaction is a (hydroxy)phthioceranyl-[(hydroxy)phthioceranic acid synthase] + 2'-palmitoyl/stearoyl-2-O-sulfo-alpha,alpha-trehalose = a 3'-(hydroxy)phthioceranyl-2'-palmitoyl/stearoyl-2-O-sulfo-alpha,alpha-trehalose + holo-[(hydroxy)phthioceranic acid synthase].. In terms of biological role, required for the biosynthesis of sulfolipid-1 (SL-1), a major mycobacterial cell wall lipid. Catalyzes the acylation of trehalose-2-sulfate-2'-palmitate (SL659) by adding the (hydroxy)phthioceranoyl group at the 3'-position to yield the diacylated intermediate 2-palmitoyl-3-(C43)-phthioceranyl-alpha, alpha'-D-trehalose-2'-sulfate (SL1278). The protein is 2'-acyl-2-O-sulfo-trehalose (hydroxy)phthioceranyltransferase PapA1 (papA1) of Mycobacterium tuberculosis (strain CDC 1551 / Oshkosh).